A 513-amino-acid chain; its full sequence is Quiannulatic acid synthase (513 aa).

Residues 14–34 traverse the membrane as a helical segment; sequence VFTFCNIILALASLVVAQCVY. An N-linked (GlcNAc...) asparagine glycan is attached at Asn-308. Cys-477 serves as a coordination point for heme.

It belongs to the cytochrome P450 family. The cofactor is heme.

The protein localises to the membrane. The catalysed reaction is quiannulatene + 3 reduced [NADPH--hemoprotein reductase] + 3 O2 = quiannulatate + 3 oxidized [NADPH--hemoprotein reductase] + 4 H2O + 4 H(+). It functions in the pathway secondary metabolite biosynthesis; terpenoid biosynthesis. Cytochrome P450 monooxygenase; part of the gene cluster that mediates the biosynthesis of the pentacyclic sesterterpene quiannulatic acid. The first step of the pathway is performed by the sesterterpene synthase (QS) that possesses both prenyl transferase and terpene cyclase activity, converting isopentenyl diphosphate and dimethylallyl diphosphate into geranylfarnesyl diphosphate (GFPP) and further converting GFPP into quiannulatene via an unprecedented cyclization mode which involves three rounds of hydride shifts and two successive C-C bond migrations to construct the 5-6-5-5-5 fused ring. The cytochrome P450 monooxygenase Qnn-P450 then oxidizes quiannulatene at C-19 in 3 successive reactions to afford quiannulatic acid. This Emericella variicolor (Aspergillus stellatus) protein is Quiannulatic acid synthase.